A 214-amino-acid chain; its full sequence is Cysteine-rich venom protein LEI1 (214 aa).

An N-terminal signal peptide occupies residues Met-1–Gly-18. The 129-residue stretch at Val-37–Tyr-165 folds into the SCP domain. Cystine bridges form between Cys-74/Cys-152, Cys-91/Cys-166, Cys-147/Cys-163, Cys-185/Cys-192, and Cys-188/Cys-197. The region spanning Cys-201 to Val-214 is the ShKT domain.

The protein belongs to the CRISP family. In terms of tissue distribution, expressed by the venom gland.

The protein localises to the secreted. Its function is as follows. Blocks contraction of smooth muscle elicited by high potassium-induced depolarization, but does not block caffeine-stimulated contraction. May target voltage-gated calcium channels on smooth muscle. This is Cysteine-rich venom protein LEI1 from Leioheterodon madagascariensis (Malagasy giant hognose snake).